The chain runs to 353 residues: Putrescine N-methyltransferase 2 (353 aa).

The disordered stretch occupies residues 15–50 (KSGAIPMNGHHNGTSKHQNGHKNGTSEQQNGTISLD). The span at 25 to 50 (HNGTSKHQNGHKNGTSEQQNGTISLD) shows a compositional bias: polar residues. A PABS domain is found at 64-301 (PGWFSEFSAL…GVIGYMLCST (238 aa)). Residues Q95, E170, and 201 to 202 (DG) contribute to the S-adenosyl-L-methionine site. D220 acts as the Proton acceptor in catalysis. Y289 lines the S-adenosyl-L-methionine pocket.

The protein belongs to the class I-like SAM-binding methyltransferase superfamily. Putrescine methyltransferase family. As to expression, predominantly expressed in roots.

The enzyme catalyses putrescine + S-adenosyl-L-methionine = N-methylputrescine + S-adenosyl-L-homocysteine + H(+). It participates in alkaloid biosynthesis; nicotine biosynthesis. Its function is as follows. Involved in the biosynthesis of pyridine alkaloid natural products, leading mainly to the production of anabasine, anatabine, nicotine and nornicotine, effective deterrents against herbivores with antiparasitic and pesticide properties (neurotoxins); nornicotine serves as the precursor in the synthesis of the carcinogen compound N'-nitrosonornicotine (NNN). Methyltransferase that mediates the conversion of putrescine to N-methylputrescine. Promotes leaves ripening. This is Putrescine N-methyltransferase 2 from Nicotiana tabacum (Common tobacco).